The sequence spans 535 residues: EH domain-containing protein 3 (535 aa).

Residue methionine 1 is modified to N-acetylmethionine. A Dynamin-type G domain is found at 55-286; the sequence is FDNKPMVLLV…DLFKDIQSLP (232 aa). The interval 65–72 is G1 motif; the sequence is GQYSTGKT. 65–72 is a binding site for ATP; that stretch reads GQYSTGKT. The segment at 91-92 is G2 motif; sequence EP. The tract at residues 153–156 is G3 motif; that stretch reads DTPG. A coiled-coil region spans residues 198-227; sequence DEFSEVIKALKNHEDKMRVVLNKADQIETQ. Residues 219-222 are G4 motif; it reads NKAD. Lysine 220 serves as a coordination point for ATP. Position 243 (isoleucine 243) is a region of interest, G5 motif. Residue tryptophan 258 coordinates ATP. Lysine 315 is covalently cross-linked (Glycyl lysine isopeptide (Lys-Gly) (interchain with G-Cter in SUMO)). 2 positions are modified to phosphoserine: serine 349 and serine 456. The EH domain occupies 444–532; sequence DKPMYDEIFY…AHLLPPSKRK (89 aa). Residues 476-511 enclose the EF-hand domain; it reads LPNSVLGKIWKLADIDKDGMLDDEEFALANHLIKVK. Positions 489, 491, 493, 495, and 500 each coordinate Ca(2+). A Glycyl lysine isopeptide (Lys-Gly) (interchain with G-Cter in SUMO) cross-link involves residue lysine 511.

Belongs to the TRAFAC class dynamin-like GTPase superfamily. Dynamin/Fzo/YdjA family. EHD subfamily. Homooligomer, and heterooligomer with EHD1, EHD2 and EHD4, ATP-binding is required for heterooligomerization. Interacts with PACSIN1. Interacts with PACSIN2. Interacts (via EH domain) with MICALL1. Interacts (via EH domain) with RAB11FIP2. Interacts with ANK2. Interacts with CACNA1GG and CACNA1H.

The protein localises to the recycling endosome membrane. Its subcellular location is the cell membrane. The protein resides in the cell projection. It localises to the cilium membrane. In terms of biological role, ATP- and membrane-binding protein that controls membrane reorganization/tubulation upon ATP hydrolysis. In vitro causes tubulation of endocytic membranes. Binding to phosphatidic acid induces its membrane tubulation activity. Plays a role in endocytic transport. Involved in early endosome to recycling endosome compartment (ERC), retrograde early endosome to Golgi, and endosome to plasma membrane (rapid recycling) protein transport. Involved in the regulation of Golgi maintenance and morphology. Involved in the recycling of internalized D1 dopamine receptor. Plays a role in cardiac protein trafficking probably implicating ANK2. Involved in the ventricular membrane targeting of SLC8A1 and CACNA1C and probably the atrial membrane localization of CACNA1GG and CACNA1H implicated in the regulation of atrial myocyte excitability and cardiac conduction. In conjunction with EHD4 may be involved in endocytic trafficking of KDR/VEGFR2 implicated in control of glomerular function. Involved in the rapid recycling of integrin beta-3 implicated in cell adhesion maintenance. Involved in the unidirectional retrograde dendritic transport of endocytosed BACE1 and in efficient sorting of BACE1 to axons implicating a function in neuronal APP processing. Plays a role in the formation of the ciliary vesicle, an early step in cilium biogenesis; possibly sharing redundant functions with Ehd1. This Rattus norvegicus (Rat) protein is EH domain-containing protein 3.